The primary structure comprises 494 residues: Protein nucleotidyltransferase YdiU (494 aa).

8 residues coordinate ATP: Gly-99, Gly-101, Arg-102, Lys-118, Asp-130, Gly-131, Arg-181, and Arg-188. Asp-261 functions as the Proton acceptor in the catalytic mechanism. Mg(2+) contacts are provided by Asn-262 and Asp-271. Asp-271 provides a ligand contact to ATP.

This sequence belongs to the SELO family. Mg(2+) serves as cofactor. It depends on Mn(2+) as a cofactor.

The catalysed reaction is L-seryl-[protein] + ATP = 3-O-(5'-adenylyl)-L-seryl-[protein] + diphosphate. It catalyses the reaction L-threonyl-[protein] + ATP = 3-O-(5'-adenylyl)-L-threonyl-[protein] + diphosphate. It carries out the reaction L-tyrosyl-[protein] + ATP = O-(5'-adenylyl)-L-tyrosyl-[protein] + diphosphate. The enzyme catalyses L-histidyl-[protein] + UTP = N(tele)-(5'-uridylyl)-L-histidyl-[protein] + diphosphate. The catalysed reaction is L-seryl-[protein] + UTP = O-(5'-uridylyl)-L-seryl-[protein] + diphosphate. It catalyses the reaction L-tyrosyl-[protein] + UTP = O-(5'-uridylyl)-L-tyrosyl-[protein] + diphosphate. Functionally, nucleotidyltransferase involved in the post-translational modification of proteins. It can catalyze the addition of adenosine monophosphate (AMP) or uridine monophosphate (UMP) to a protein, resulting in modifications known as AMPylation and UMPylation. The polypeptide is Protein nucleotidyltransferase YdiU (Variovorax paradoxus (strain S110)).